The chain runs to 116 residues: Nucleoid-associated protein P9301_00191 (116 aa).

It belongs to the YbaB/EbfC family. As to quaternary structure, homodimer.

The protein resides in the cytoplasm. It localises to the nucleoid. Functionally, binds to DNA and alters its conformation. May be involved in regulation of gene expression, nucleoid organization and DNA protection. The polypeptide is Nucleoid-associated protein P9301_00191 (Prochlorococcus marinus (strain MIT 9301)).